Consider the following 640-residue polypeptide: UvrABC system protein C (640 aa).

The GIY-YIG domain maps to 22–101 (NDPGCYLMKD…IKSHQPYFNV (80 aa)). A UVR domain is found at 211–246 (DELRILLEKQMISFSESLKFEEAGSVRDQLKGIDRL).

This sequence belongs to the UvrC family. Interacts with UvrB in an incision complex.

The protein localises to the cytoplasm. The UvrABC repair system catalyzes the recognition and processing of DNA lesions. UvrC both incises the 5' and 3' sides of the lesion. The N-terminal half is responsible for the 3' incision and the C-terminal half is responsible for the 5' incision. This chain is UvrABC system protein C, found in Prochlorococcus marinus (strain NATL1A).